A 306-amino-acid polypeptide reads, in one-letter code: Replication termination factor 2 (306 aa).

The segment at 193–276 (AKLEKKTKKP…RSIADSEESE (84 aa)) is disordered. Positions 226-240 (GKPEEASLDSREKKT) are enriched in basic and acidic residues. Residues 243 to 255 (APKSTAMNESSSG) show a composition bias toward polar residues. Position 287 is a phosphoserine (S287).

This sequence belongs to the rtf2 family. In terms of assembly, interacts with DDI2; probably also interacts with DDI1. In terms of processing, undergoes proteasomal degradation, via DDI1 and DDI2. Removal from stalled replisomes and degradation are required for genome stability.

It is found in the chromosome. Functionally, replication termination factor which is a component of the elongating replisome. Required for ATR pathway signaling upon DNA damage and has a positive activity during DNA replication. Might function to facilitate fork pausing at replication fork barriers like the rDNA. May be globally required to stimulate ATR signaling after the fork stalls or encounters a lesion. Interacts with nascent DNA. In Homo sapiens (Human), this protein is Replication termination factor 2.